The sequence spans 313 residues: 4-diphosphocytidyl-2-C-methyl-D-erythritol kinase (313 aa).

The active site involves Lys10. ATP is bound at residue 95 to 105 (PVTAGLGGGSS). Asp136 is an active-site residue. The disordered stretch occupies residues 289–313 (HPRVSPWRSPRSASSPSTRRSSRPT). Positions 292–307 (VSPWRSPRSASSPSTR) are enriched in low complexity.

This sequence belongs to the GHMP kinase family. IspE subfamily.

It catalyses the reaction 4-CDP-2-C-methyl-D-erythritol + ATP = 4-CDP-2-C-methyl-D-erythritol 2-phosphate + ADP + H(+). It participates in isoprenoid biosynthesis; isopentenyl diphosphate biosynthesis via DXP pathway; isopentenyl diphosphate from 1-deoxy-D-xylulose 5-phosphate: step 3/6. In terms of biological role, catalyzes the phosphorylation of the position 2 hydroxy group of 4-diphosphocytidyl-2C-methyl-D-erythritol. This Anaeromyxobacter dehalogenans (strain 2CP-C) protein is 4-diphosphocytidyl-2-C-methyl-D-erythritol kinase.